A 307-amino-acid chain; its full sequence is 4-diphosphocytidyl-2-C-methyl-D-erythritol kinase (307 aa).

The active site involves Lys9. Pro94–Ser104 contributes to the ATP binding site. Residue Asp136 is part of the active site.

It belongs to the GHMP kinase family. IspE subfamily.

It catalyses the reaction 4-CDP-2-C-methyl-D-erythritol + ATP = 4-CDP-2-C-methyl-D-erythritol 2-phosphate + ADP + H(+). The protein operates within isoprenoid biosynthesis; isopentenyl diphosphate biosynthesis via DXP pathway; isopentenyl diphosphate from 1-deoxy-D-xylulose 5-phosphate: step 3/6. In terms of biological role, catalyzes the phosphorylation of the position 2 hydroxy group of 4-diphosphocytidyl-2C-methyl-D-erythritol. The polypeptide is 4-diphosphocytidyl-2-C-methyl-D-erythritol kinase (Synechococcus sp. (strain CC9902)).